The sequence spans 408 residues: MSSRRLGVVRPLLQMGLIPQITIGIIAGVLLAVIWPDTAQSVSLLGQLFISALKAVAPILVFALVTAAIANHQQGQPTHIRGVLLLYVIGTLVAAVVAVIASFVFPTELTLELPEVSGNPPGGVVEILRNLLLSAVTNPVSALMEGNFIAILAWAVGLGLMLRQGRDATRQVVNDLSDAISGIVRAVIRFAPLGIFGLVANTLADAGIGALLEYGRLLAVIVGCMLFVALVTNPLIVFLHTRQNPYPLVFACLRGSAITAFFTRSSAANIPVNLNLCDRLGLDPDTYAISIPLGATINMAGAAITISVITLAAANTLGIPVDFPTALLLCVVSSIAACGVSGVAGGSLLLIPLATSLFGISTEVAMQVVAIGFVISVVQDSTETALNSSTDVLFTAAACRSAEVRESA.

Transmembrane regions (helical) follow at residues 15–35, 49–69, 85–105, 142–162, 192–212, 218–238, 246–268, 289–309, 317–337, and 362–382; these read MGLI…AVIW, FISA…TAAI, LLYV…SFVF, ALME…GLML, PLGI…GALL, LAVI…LIVF, YPLV…SSAA, ISIP…ISVI, LGIP…SIAA, and TEVA…QDST.

The protein belongs to the dicarboxylate/amino acid:cation symporter (DAACS) (TC 2.A.23) family.

The protein localises to the cell inner membrane. It carries out the reaction L-serine(in) + Na(+)(in) = L-serine(out) + Na(+)(out). The enzyme catalyses L-threonine(in) + Na(+)(in) = L-threonine(out) + Na(+)(out). Its function is as follows. Involved in the import of serine and threonine into the cell, with the concomitant import of sodium (symport system). The chain is Serine/threonine transporter SstT from Marinobacter nauticus (strain ATCC 700491 / DSM 11845 / VT8) (Marinobacter aquaeolei).